A 486-amino-acid chain; its full sequence is tRNA sulfurtransferase (486 aa).

In terms of domain architecture, THUMP spans 61–165; sequence AILIDVLGRI…NDHMMLIKAR (105 aa). ATP-binding positions include 183 to 184, lysine 265, glycine 287, and glutamine 296; that span reads LI. A disulfide bridge links cysteine 344 with cysteine 456. The Rhodanese domain maps to 404–481; that stretch reads LSANDVILDI…NGFANVRVFA (78 aa). The active-site Cysteine persulfide intermediate is the cysteine 456.

Belongs to the ThiI family.

It is found in the cytoplasm. It catalyses the reaction [ThiI sulfur-carrier protein]-S-sulfanyl-L-cysteine + a uridine in tRNA + 2 reduced [2Fe-2S]-[ferredoxin] + ATP + H(+) = [ThiI sulfur-carrier protein]-L-cysteine + a 4-thiouridine in tRNA + 2 oxidized [2Fe-2S]-[ferredoxin] + AMP + diphosphate. The catalysed reaction is [ThiS sulfur-carrier protein]-C-terminal Gly-Gly-AMP + S-sulfanyl-L-cysteinyl-[cysteine desulfurase] + AH2 = [ThiS sulfur-carrier protein]-C-terminal-Gly-aminoethanethioate + L-cysteinyl-[cysteine desulfurase] + A + AMP + 2 H(+). It functions in the pathway cofactor biosynthesis; thiamine diphosphate biosynthesis. Its function is as follows. Catalyzes the ATP-dependent transfer of a sulfur to tRNA to produce 4-thiouridine in position 8 of tRNAs, which functions as a near-UV photosensor. Also catalyzes the transfer of sulfur to the sulfur carrier protein ThiS, forming ThiS-thiocarboxylate. This is a step in the synthesis of thiazole, in the thiamine biosynthesis pathway. The sulfur is donated as persulfide by IscS. The polypeptide is tRNA sulfurtransferase (Mannheimia succiniciproducens (strain KCTC 0769BP / MBEL55E)).